Consider the following 281-residue polypeptide: Protein synthesis inhibitor I (281 aa).

A2 carries the N-acetylalanine modification. The active site involves E175.

Belongs to the ribosome-inactivating protein family. Type 1 RIP subfamily.

Its subcellular location is the cytoplasm. The enzyme catalyses Endohydrolysis of the N-glycosidic bond at one specific adenosine on the 28S rRNA.. Its function is as follows. Inhibits the elongation phase of protein synthesis. It inactivates fungal ribosomes even more effectively than mammalian ribosomes and is thought to function as a constitutive antifungal agent in plants. In Hordeum vulgare (Barley), this protein is Protein synthesis inhibitor I (RIP30).